The chain runs to 316 residues: Transcription initiation factor IIB (316 aa).

The TFIIB-type zinc-finger motif lies at 11-42 (PRVTCPNHPDAILVEDYRAGDMICPECGLVVG). Zn(2+) contacts are provided by C15, H18, C34, and C37. Phosphoserine is present on residues S70, S76, and S92. A run of 2 repeats spans residues 124–200 (MADR…LILK) and 218–294 (FCSN…LIYP). DNA is bound by residues K152, R154, K189, and K196. The core promoter DNA-binding stretch occupies residues 189 to 193 (KEIGR). K238 bears the N6-acetyllysine; by autocatalysis mark. A necessary for TATA box-bound complex TBP formation region spans residues 244-316 (LVPGRSPISV…DTPVDKLPQL (73 aa)). Residue R248 coordinates DNA. Positions 249–252 (SPIS) are core promoter DNA-binding. 5 residues coordinate DNA: K272, A281, T284, R286, and R290. The tract at residues 283–286 (VTIR) is core promoter DNA-binding.

It belongs to the TFIIB family. In terms of assembly, found in a ternary complex with TATA box-bound TBP. Part of a TFIID-containing RNA polymerase II pre-initiation complex (PIC) that is composed of TBP and at least GTF2A1, GTF2A2, GTF2E1, GTF2E2, GTF2F1, GTF2H2, GTF2H3, GTF2H4, GTF2H5, GTF2B, TCEA1, ERCC2, ERCC3, TAF1, TAF2, TAF3, TAF4, TAF5, TAF6, TAF7, TAF8, TAF9, TAF10, TAF11, TAF12 and TAF13. Associates with TFIID-TFIIA (DA complex) to form TFIID-TFIIA-TFIIB (DAB complex), which is then recognized by RNA polymerase II (Pol II). Found in a RNA polymerase II initiation complex. Interacts (via C-terminus) with TBP; this interaction with TATA box-bound TBP guides Pol II into the PIC. Interacts (via N-terminus) with Pol II. Interacts (via C-terminus) with SSU72; this interaction is inhibited by SYMPK. Interacts with NR2F1; this interaction is direct. Interacts with PGR. Interacts with ESR1. Interacts with GTF2F1 (via C-terminus and preferentially via acetylated form); this interaction prevents binding of GTF2B to GTF2F2. Interacts with GTF2F2 (via N-terminus); this interaction is inhibited in presence of GTF2F1. Interacts with the transcription elongation factor TCEA2. Interacts with HSF1 (via transactivation domain). Interacts with GPBP1. In terms of processing, acetylated. Autoacetylated; autoacetylation at Lys-238 stimulates transcription activation.

The protein resides in the nucleus. Its subcellular location is the chromosome. It carries out the reaction L-lysyl-[protein] + acetyl-CoA = N(6)-acetyl-L-lysyl-[protein] + CoA + H(+). General transcription factor that plays a role in transcription initiation by RNA polymerase II (Pol II). Involved in the pre-initiation complex (PIC) formation and Pol II recruitment at promoter DNA. Together with the TATA box-bound TBP forms the core initiation complex and provides a bridge between TBP and the Pol II-TFIIF complex. Released from the PIC early following the onset of transcription during the initiation and elongation transition and reassociates with TBP during the next transcription cycle. Associates with chromatin to core promoter-specific regions. Binds to two distinct DNA core promoter consensus sequence elements in a TBP-independent manner; these IIB-recognition elements (BREs) are localized immediately upstream (BREu), 5'-[GC][GC][GA]CGCC-3', and downstream (BREd), 5'-[GA]T[TGA][TG][GT][TG][TG]-3', of the TATA box element. Modulates transcription start site selection. Also exhibits autoacetyltransferase activity that contributes to the activated transcription. The sequence is that of Transcription initiation factor IIB from Pongo abelii (Sumatran orangutan).